Consider the following 296-residue polypeptide: Claudin-23 (296 aa).

The Cytoplasmic portion of the chain corresponds to 1–2 (MR). A helical membrane pass occupies residues 3-23 (TPVVMTLGMVLTPCGLLLNLV). At 24 to 81 (STLAPGWRLVKGFLDQPVDVVLYQGLWDICREQSSRERECGQPDEWNYFQTQPVQVAR) the chain is on the extracellular side. Residues 82–102 (GLMITSLATTALGLLLASLGV) form a helical membrane-spanning segment. The Cytoplasmic segment spans residues 103-111 (RCWQDEPHY). Residues 112 to 132 (GLAGLSGVVFFVAGLFSLIPV) form a helical membrane-spanning segment. Residues 133–160 (SWYNHFLSDPDVLAAPSSPVTVQVSYSL) are Extracellular-facing. A helical transmembrane segment spans residues 161 to 181 (VLGYLGSCLLLLGGFSLALSF). Over 182–296 (APWCEERCRR…QNSLPCDSDL (115 aa)) the chain is Cytoplasmic. The segment at 224–296 (YSDGQHRPPP…QNSLPCDSDL (73 aa)) is disordered. Over residues 273–284 (TSQGGSSSRSTR) the composition is skewed to low complexity. Positions 285–296 (PCQNSLPCDSDL) are enriched in polar residues.

It belongs to the claudin family.

The protein localises to the cell junction. It localises to the tight junction. Its subcellular location is the cell membrane. In terms of biological role, plays a major role in tight junction-specific obliteration of the intercellular space, through calcium-independent cell-adhesion activity. The protein is Claudin-23 (Cldn23) of Mus musculus (Mouse).